Reading from the N-terminus, the 310-residue chain is Probable L,D-transpeptidase ErfK/SrfK (310 aa).

Positions 1–21 are cleaved as a signal peptide; that stretch reads MRRVNILCSFALLFASHTSLA. The region spanning 96-231 is the L,D-TPase catalytic domain; it reads KGIVVNVAEM…VPVGTRVQII (136 aa). The active-site Proton donor/acceptor is histidine 191. The active-site Nucleophile is cysteine 207.

This sequence belongs to the YkuD family. As to quaternary structure, interacts with DsbG.

It localises to the periplasm. The protein operates within cell wall biogenesis; peptidoglycan biosynthesis. Its function is as follows. Responsible, at least in part, for anchoring of the major outer membrane lipoprotein (Lpp, also known as the Braun lipoprotein) to the peptidoglycan via a meso-diaminopimelyl-L-Lys- bond on the terminal residue of Lpp. The protein is Probable L,D-transpeptidase ErfK/SrfK (erfK) of Escherichia coli (strain K12).